Here is a 119-residue protein sequence, read N- to C-terminus: Ribonuclease P protein component (119 aa).

This sequence belongs to the RnpA family. In terms of assembly, consists of a catalytic RNA component (M1 or rnpB) and a protein subunit.

It catalyses the reaction Endonucleolytic cleavage of RNA, removing 5'-extranucleotides from tRNA precursor.. In terms of biological role, RNaseP catalyzes the removal of the 5'-leader sequence from pre-tRNA to produce the mature 5'-terminus. It can also cleave other RNA substrates such as 4.5S RNA. The protein component plays an auxiliary but essential role in vivo by binding to the 5'-leader sequence and broadening the substrate specificity of the ribozyme. In Streptococcus pyogenes serotype M5 (strain Manfredo), this protein is Ribonuclease P protein component.